The primary structure comprises 103 residues: Small ubiquitin-related modifier 2 (103 aa).

The 78-residue stretch at 15-92 folds into the Ubiquitin-like domain; the sequence is AHINLKVKGQ…IDAMLHQTGG (78 aa). G92 is covalently cross-linked (Glycyl lysine isopeptide (Gly-Lys) (interchain with K-? in acceptor proteins)).

The protein belongs to the ubiquitin family. SUMO subfamily. Interacts with SAE2, SCE1, SIZ1 and MMS21. Interacts with HSFA2. Covalently attached to ABI5, FLD, GTE3, HSFA2 and ICE1.

The protein resides in the nucleus. It is found in the cytoplasm. Ubiquitin-like protein which can be covalently attached to target lysines as a monomer. Does not seem to be involved in protein degradation and may function as an antagonist of ubiquitin in the degradation process. Required for the massive protein sumoylation in the nucleus induced by heat shock and controlled by SIZ1. The polypeptide is Small ubiquitin-related modifier 2 (Arabidopsis thaliana (Mouse-ear cress)).